Reading from the N-terminus, the 237-residue chain is Demethylmenaquinone methyltransferase (237 aa).

Residues Thr58, Asp79, and 106–107 each bind S-adenosyl-L-methionine; that span reads NA.

It belongs to the class I-like SAM-binding methyltransferase superfamily. MenG/UbiE family.

The catalysed reaction is a 2-demethylmenaquinol + S-adenosyl-L-methionine = a menaquinol + S-adenosyl-L-homocysteine + H(+). The protein operates within quinol/quinone metabolism; menaquinone biosynthesis; menaquinol from 1,4-dihydroxy-2-naphthoate: step 2/2. Methyltransferase required for the conversion of demethylmenaquinol (DMKH2) to menaquinol (MKH2). The polypeptide is Demethylmenaquinone methyltransferase (Bacillus cereus (strain B4264)).